Consider the following 397-residue polypeptide: uncharacterized protein (397 aa).

This is an uncharacterized protein from Methanocaldococcus jannaschii (strain ATCC 43067 / DSM 2661 / JAL-1 / JCM 10045 / NBRC 100440) (Methanococcus jannaschii).